A 200-amino-acid chain; its full sequence is ATP-dependent Clp protease proteolytic subunit (200 aa).

S96 acts as the Nucleophile in catalysis. H121 is an active-site residue.

This sequence belongs to the peptidase S14 family. Fourteen ClpP subunits assemble into 2 heptameric rings which stack back to back to give a disk-like structure with a central cavity, resembling the structure of eukaryotic proteasomes.

It is found in the cytoplasm. It catalyses the reaction Hydrolysis of proteins to small peptides in the presence of ATP and magnesium. alpha-casein is the usual test substrate. In the absence of ATP, only oligopeptides shorter than five residues are hydrolyzed (such as succinyl-Leu-Tyr-|-NHMec, and Leu-Tyr-Leu-|-Tyr-Trp, in which cleavage of the -Tyr-|-Leu- and -Tyr-|-Trp bonds also occurs).. Functionally, cleaves peptides in various proteins in a process that requires ATP hydrolysis. Has a chymotrypsin-like activity. Plays a major role in the degradation of misfolded proteins. This Leuconostoc citreum (strain KM20) protein is ATP-dependent Clp protease proteolytic subunit.